Consider the following 353-residue polypeptide: D-alanine--D-alanine ligase (353 aa).

Residues 141 to 349 form the ATP-grasp domain; that stretch reads KAAFAAAGLP…LPDLVAQLVH (209 aa). 176-231 is an ATP binding site; that stretch reads EAELGYPCFVKPANMGSSVGISKARHRDQLLAGLKEAARHDTRLVVEHGVSARELE. Residues Asp-302, Glu-316, and Asn-318 each coordinate Mg(2+).

It belongs to the D-alanine--D-alanine ligase family. Requires Mg(2+) as cofactor. Mn(2+) is required as a cofactor.

The protein resides in the cytoplasm. It carries out the reaction 2 D-alanine + ATP = D-alanyl-D-alanine + ADP + phosphate + H(+). It participates in cell wall biogenesis; peptidoglycan biosynthesis. Functionally, cell wall formation. The chain is D-alanine--D-alanine ligase from Synechococcus sp. (strain CC9311).